A 306-amino-acid chain; its full sequence is D-alanine--D-alanine ligase (306 aa).

The 203-residue stretch at Lys101–Glu303 folds into the ATP-grasp domain. ATP is bound at residue Ile134–Thr189. Mg(2+) contacts are provided by Asp257, Glu270, and Asn272.

The protein belongs to the D-alanine--D-alanine ligase family. Mg(2+) serves as cofactor. The cofactor is Mn(2+).

It localises to the cytoplasm. The enzyme catalyses 2 D-alanine + ATP = D-alanyl-D-alanine + ADP + phosphate + H(+). It functions in the pathway cell wall biogenesis; peptidoglycan biosynthesis. Cell wall formation. This Erwinia tasmaniensis (strain DSM 17950 / CFBP 7177 / CIP 109463 / NCPPB 4357 / Et1/99) protein is D-alanine--D-alanine ligase.